Reading from the N-terminus, the 624-residue chain is Acidic juvenile hormone-suppressible protein 1 (624 aa).

An N-terminal signal peptide occupies residues 1-18 (MARLVLCALALLVAGGLA). N-linked (GlcNAc...) asparagine glycans are attached at residues Asn75 and Asn478.

This sequence belongs to the hemocyanin family.

Its subcellular location is the secreted. It is found in the extracellular space. In Trichoplusia ni (Cabbage looper), this protein is Acidic juvenile hormone-suppressible protein 1 (AJSP-1).